Reading from the N-terminus, the 253-residue chain is Geranylgeranylglyceryl phosphate synthase (253 aa).

Residues Asp-28 and Ser-53 each coordinate Mg(2+). Residues 172 to 178, 203 to 204, and 225 to 226 contribute to the sn-glycerol 1-phosphate site; these read YLEAGSG, GG, and GN.

This sequence belongs to the GGGP/HepGP synthase family. Group II subfamily. Mg(2+) is required as a cofactor.

The protein localises to the cytoplasm. It carries out the reaction sn-glycerol 1-phosphate + (2E,6E,10E)-geranylgeranyl diphosphate = sn-3-O-(geranylgeranyl)glycerol 1-phosphate + diphosphate. Its pathway is membrane lipid metabolism; glycerophospholipid metabolism. Its function is as follows. Prenyltransferase that catalyzes the transfer of the geranylgeranyl moiety of geranylgeranyl diphosphate (GGPP) to the C3 hydroxyl of sn-glycerol-1-phosphate (G1P). This reaction is the first ether-bond-formation step in the biosynthesis of archaeal membrane lipids. The sequence is that of Geranylgeranylglyceryl phosphate synthase from Methanocaldococcus jannaschii (strain ATCC 43067 / DSM 2661 / JAL-1 / JCM 10045 / NBRC 100440) (Methanococcus jannaschii).